The sequence spans 785 residues: DNA ligase (785 aa).

Residues 32-36 (DAEYD), 81-82 (SL), and Glu121 contribute to the NAD(+) site. The N6-AMP-lysine intermediate role is filled by Lys123. Positions 144, 181, 294, and 318 each coordinate NAD(+). 4 residues coordinate Zn(2+): Cys412, Cys415, Cys442, and Cys448. A BRCT domain is found at 702-785 (VEGLPEAGHT…AFLAKHNIPV (84 aa)).

Belongs to the NAD-dependent DNA ligase family. LigA subfamily. The cofactor is Mg(2+). It depends on Mn(2+) as a cofactor.

It carries out the reaction NAD(+) + (deoxyribonucleotide)n-3'-hydroxyl + 5'-phospho-(deoxyribonucleotide)m = (deoxyribonucleotide)n+m + AMP + beta-nicotinamide D-nucleotide.. Its function is as follows. DNA ligase that catalyzes the formation of phosphodiester linkages between 5'-phosphoryl and 3'-hydroxyl groups in double-stranded DNA using NAD as a coenzyme and as the energy source for the reaction. It is essential for DNA replication and repair of damaged DNA. This chain is DNA ligase, found in Pseudomonas fluorescens (strain SBW25).